We begin with the raw amino-acid sequence, 1280 residues long: SET and MYND domain-containing protein DDB_G0284059 (1280 aa).

2 disordered regions span residues 1-35 and 111-167; these read MTKK…SHNH and INKI…QKQQ. Low complexity-rich tracts occupy residues 16 to 25 and 117 to 153; these read NNNNNNNHGN and ENSP…QSQP. 2 TPR repeats span residues 272–305 and 383–416; these read SKGY…YDME and HKLY…IEKR. Positions 439–468 form a coiled coil; the sequence is QKDEEIEQELDNKNNNSNDDEKQQQQQQQQ. Zn(2+) is bound by residues C533, C536, C546, C549, C555, C559, H568, and C572. The segment at 533-572 adopts an MYND-type zinc-finger fold; the sequence is CYNCFKEILSPIYCKECSNSQYCSNKCLNEDYVKQHGREC. Disordered stretches follow at residues 601–642, 659–726, 854–905, and 1039–1079; these read ANKG…QNLN, ALSS…TTTT, QQQQ…PFSP, and AKLQ…LNNN. 5 stretches are compositionally biased toward low complexity: residues 659-697, 712-726, 854-898, 1042-1053, and 1061-1079; these read ALSS…SLTE, SSSS…TTTT, QQQQ…QNPP, QQQQQQQQQHQQ, and NSNP…LNNN. An SET domain is found at 822–965; the sequence is CQLTTYTFAI…KGEEILGCYG (144 aa). The TPR 3 repeat unit spans residues 1218-1251; sequence GREYSKLGQIYLTLGEIEKSEDAIEKAESILMSW.

Belongs to the class V-like SAM-binding methyltransferase superfamily.

In terms of biological role, probable methyltransferase. The chain is SET and MYND domain-containing protein DDB_G0284059 from Dictyostelium discoideum (Social amoeba).